A 351-amino-acid chain; its full sequence is N-acetyl-gamma-glutamyl-phosphate reductase (351 aa).

Cysteine 150 is an active-site residue.

This sequence belongs to the NAGSA dehydrogenase family. Type 1 subfamily.

It localises to the cytoplasm. It catalyses the reaction N-acetyl-L-glutamate 5-semialdehyde + phosphate + NADP(+) = N-acetyl-L-glutamyl 5-phosphate + NADPH + H(+). Its pathway is amino-acid biosynthesis; L-arginine biosynthesis; N(2)-acetyl-L-ornithine from L-glutamate: step 3/4. Functionally, catalyzes the NADPH-dependent reduction of N-acetyl-5-glutamyl phosphate to yield N-acetyl-L-glutamate 5-semialdehyde. The protein is N-acetyl-gamma-glutamyl-phosphate reductase of Heliobacterium modesticaldum (strain ATCC 51547 / Ice1).